We begin with the raw amino-acid sequence, 110 residues long: Small ubiquitin-related modifier 3 (110 aa).

Residues K5 and K7 each participate in a glycyl lysine isopeptide (Lys-Gly) (interchain with G-Cter in SUMO2) cross-link. A Glycyl lysine isopeptide (Lys-Gly) (interchain with G-Cter in SUMO); alternate cross-link involves residue K11. K11 is covalently cross-linked (Glycyl lysine isopeptide (Lys-Gly) (interchain with G-Cter in SUMO2); alternate). A Ubiquitin-like domain is found at 15–92 (DHINLKVAGQ…IDVFQQQTGG (78 aa)). Residues 88-101 (QQTGGSASRGSVPT) are compositionally biased toward polar residues. The interval 88 to 110 (QQTGGSASRGSVPTPNRCPDLCY) is disordered. Residue G92 forms a Glycyl lysine isopeptide (Gly-Lys) (interchain with K-? in acceptor proteins) linkage. A propeptide spanning residues 93-110 (SASRGSVPTPNRCPDLCY) is cleaved from the precursor.

It belongs to the ubiquitin family. SUMO subfamily. Interacts with SAE2 and UBE2I. Covalently attached to a number of proteins. Interacts with USP25 (via ts SIM domain); the interaction sumoylates USP25 and inhibits its ubiquitin hydrolyzing activity. Interacts with BMAL1. In terms of processing, polymeric chains can be formed through Lys-11 cross-linking. Post-translationally, cleavage of precursor form by SENP1, SENP2 or SENP5 is necessary for function.

It localises to the cytoplasm. It is found in the nucleus. The protein resides in the PML body. In terms of biological role, ubiquitin-like protein which can be covalently attached to target lysines either as a monomer or as a lysine-linked polymer. Does not seem to be involved in protein degradation and may function as an antagonist of ubiquitin in the degradation process. Plays a role in a number of cellular processes such as nuclear transport, DNA replication and repair, mitosis and signal transduction. Covalent attachment to its substrates requires prior activation by the E1 complex SAE1-SAE2 and linkage to the E2 enzyme UBE2I, and can be promoted by an E3 ligase such as PIAS1-4, RANBP2 or CBX4. Plays a role in the regulation of sumoylation status of SETX. This is Small ubiquitin-related modifier 3 from Mus musculus (Mouse).